A 176-amino-acid chain; its full sequence is Cytochrome c oxidase subunit 5b-1, mitochondrial (176 aa).

Residues 1-55 constitute a mitochondrion transit peptide; sequence MWRRIVSSQLKTLAADVVAASPRRSIAATTRPVGFYLAANRSAISASSFVIPRRF. Zn(2+) is bound by residues C122, C146, and C149. The segment at 157 to 176 is disordered; sequence VVGPGGPPDGHGDEDDEHHH.

It belongs to the cytochrome c oxidase subunit 5B (TC 3.D.4.11) family.

Its subcellular location is the mitochondrion inner membrane. Its function is as follows. This protein is one of the nuclear-coded polypeptide chains of cytochrome c oxidase, the terminal oxidase in mitochondrial electron transport. This Arabidopsis thaliana (Mouse-ear cress) protein is Cytochrome c oxidase subunit 5b-1, mitochondrial (COX5B-1).